The primary structure comprises 386 residues: GTPase Obg (386 aa).

Residues 1-159 form the Obg domain; it reads MKFVDEASIL…RELLLELMLL (159 aa). The tract at residues 127–147 is disordered; the sequence is NTRFKSSVNRTPRQKTNGTPG. The segment covering 129 to 145 has biased composition (polar residues); that stretch reads RFKSSVNRTPRQKTNGT. The OBG-type G domain occupies 160–333; the sequence is ADVGMLGMPN…LCWDVMTFII (174 aa). GTP contacts are provided by residues 166–173, 191–195, 213–216, 283–286, and 314–316; these read GMPNAGKS, FTTLV, DIPG, NKID, and SAA. Residues serine 173 and threonine 193 each coordinate Mg(2+).

It belongs to the TRAFAC class OBG-HflX-like GTPase superfamily. OBG GTPase family. In terms of assembly, monomer. The cofactor is Mg(2+).

It is found in the cytoplasm. In terms of biological role, an essential GTPase which binds GTP, GDP and possibly (p)ppGpp with moderate affinity, with high nucleotide exchange rates and a fairly low GTP hydrolysis rate. Plays a role in control of the cell cycle, stress response, ribosome biogenesis and in those bacteria that undergo differentiation, in morphogenesis control. In Escherichia coli (strain UTI89 / UPEC), this protein is GTPase Obg.